The following is a 54-amino-acid chain: Ovomucoid (54 aa).

Residues 4–54 (VDCSDYPTHGCTLELKPICGSDNQTYSNKCGFCNAVAQSNGTLTLSHFGKC) enclose the Kazal-like domain. 3 cysteine pairs are disulfide-bonded: Cys-6-Cys-36, Cys-14-Cys-33, and Cys-22-Cys-54. Asn-43 carries N-linked (GlcNAc...) asparagine glycosylation.

The protein localises to the secreted. This is Ovomucoid from Aepypodius arfakianus (Wattled brush turkey).